The primary structure comprises 131 residues: Small ribosomal subunit protein uS9 (131 aa).

The protein belongs to the universal ribosomal protein uS9 family.

The protein is Small ribosomal subunit protein uS9 of Mycoplasmopsis synoviae (strain 53) (Mycoplasma synoviae).